The sequence spans 119 residues: Ribosome-binding factor A (119 aa).

Belongs to the RbfA family. In terms of assembly, monomer. Binds 30S ribosomal subunits, but not 50S ribosomal subunits or 70S ribosomes.

The protein localises to the cytoplasm. Functionally, one of several proteins that assist in the late maturation steps of the functional core of the 30S ribosomal subunit. Associates with free 30S ribosomal subunits (but not with 30S subunits that are part of 70S ribosomes or polysomes). Required for efficient processing of 16S rRNA. May interact with the 5'-terminal helix region of 16S rRNA. This Geobacter sp. (strain M21) protein is Ribosome-binding factor A.